Consider the following 297-residue polypeptide: PDZ domain-containing protein GIPC3 (297 aa).

Residues 97–177 form the PDZ domain; the sequence is EVEVTKTEDA…SQPFTLRLVQ (81 aa).

Belongs to the GIPC family. Expressed in adult lung, brain and testis. In the inner ear, it is expressed in the inner and outer hair cells of the organ of Corti. Also expressed in cochlear spiral ganglion neurons.

Functionally, required for postnatal maturation of the hair bundle and long-term survival of hair cells and spiral ganglion. The polypeptide is PDZ domain-containing protein GIPC3 (Gipc3) (Mus musculus (Mouse)).